A 194-amino-acid polypeptide reads, in one-letter code: Probable GTP-binding protein EngB (194 aa).

Residues aspartate 19–lysine 193 form the EngB-type G domain. GTP-binding positions include glycine 27 to serine 34, glycine 53 to phenylalanine 57, aspartate 70 to glycine 73, threonine 137 to aspartate 140, and valine 172 to serine 174. Serine 34 and threonine 55 together coordinate Mg(2+).

It belongs to the TRAFAC class TrmE-Era-EngA-EngB-Septin-like GTPase superfamily. EngB GTPase family. The cofactor is Mg(2+).

In terms of biological role, necessary for normal cell division and for the maintenance of normal septation. The protein is Probable GTP-binding protein EngB of Mycoplasmopsis agalactiae (strain NCTC 10123 / CIP 59.7 / PG2) (Mycoplasma agalactiae).